A 116-amino-acid chain; its full sequence is MTSSSMLTKKDWSAHARRALSPTEIVTRLADLQGWALSGDGAAVAIEKTYRFANYYETISFVNAVAFIANAQDHHPDLSVHYDRCVVRLNTHDVKGISTTDLECAARFDALLAASE.

The protein belongs to the pterin-4-alpha-carbinolamine dehydratase family.

It catalyses the reaction (4aS,6R)-4a-hydroxy-L-erythro-5,6,7,8-tetrahydrobiopterin = (6R)-L-erythro-6,7-dihydrobiopterin + H2O. This Paracidovorax citrulli (strain AAC00-1) (Acidovorax citrulli) protein is Putative pterin-4-alpha-carbinolamine dehydratase.